Consider the following 982-residue polypeptide: Serine/threonine-protein kinase ATG1 (982 aa).

Residues 19–324 (FVIGAEIGKG…FENFFAHPVI (306 aa)) form the Protein kinase domain. ATP contacts are provided by residues 25–33 (IGKGSFAQV) and Lys48. The Proton acceptor role is filled by Asp162. 4 disordered regions span residues 334–506 (DDIP…REKA), 813–834 (RLPD…SVNG), 898–918 (PKRR…DGHA), and 947–982 (RMIS…SYSS). Composition is skewed to basic and acidic residues over residues 335-359 (DIPK…KSDD) and 372-387 (HPTD…RRVE). Residues 388–398 (PPSSAAESAPS) show a composition bias toward low complexity. The segment covering 463 to 481 (SNASLNRSNRESSSPTSAA) has biased composition (polar residues).

This sequence belongs to the protein kinase superfamily. Ser/Thr protein kinase family. APG1/unc-51/ULK1 subfamily. As to quaternary structure, homodimer. Forms a ternary complex with ATG13 and ATG17. Uniformly detected in conidia, mycelia and appressoria (at protein level).

The protein localises to the cytoplasm. It is found in the preautophagosomal structure membrane. It catalyses the reaction L-seryl-[protein] + ATP = O-phospho-L-seryl-[protein] + ADP + H(+). The catalysed reaction is L-threonyl-[protein] + ATP = O-phospho-L-threonyl-[protein] + ADP + H(+). In terms of biological role, serine/threonine protein kinase involved in the cytoplasm to vacuole transport (Cvt) and found to be essential in autophagy, where it is required for the formation of autophagosomes. Involved in the clearance of protein aggregates which cannot be efficiently cleared by the proteasome. Required for selective autophagic degradation of the nucleus (nucleophagy) as well as for mitophagy which contributes to regulate mitochondrial quantity and quality by eliminating the mitochondria to a basal level to fulfill cellular energy requirements and preventing excess ROS production. Also involved in endoplasmic reticulum-specific autophagic process, in selective removal of ER-associated degradation (ERAD) substrates. Plays a key role in ATG9 and ATG23 cycling through the pre-autophagosomal structure and is necessary to promote ATG18 binding to ATG9 through phosphorylation of ATG9. Catalyzes phosphorylation of ATG4, decreasing the interaction between ATG4 and ATG8 and impairing deconjugation of PE-conjugated forms of ATG8. Autophagy is essential to fungal development, production of appressorium turgor, and pathogenicity in rice blast disease. This Pyricularia oryzae (strain 70-15 / ATCC MYA-4617 / FGSC 8958) (Rice blast fungus) protein is Serine/threonine-protein kinase ATG1.